Consider the following 1462-residue polypeptide: NK-tumor recognition protein (1462 aa).

The PPIase cyclophilin-type domain maps to 10–175 (HFDIEINREP…ADVRVIDCGV (166 aa)). Disordered stretches follow at residues 187–591 (KKRK…TMAQ) and 607–627 (VIPLSDSPPPSRWKPGQKPWK). The segment covering 198–213 (SDSSSNSSSSSESSSE) has biased composition (low complexity). Positions 221 to 240 (SRRRKHKRRPKVKRSKKRRK) are enriched in basic residues. Composition is skewed to basic and acidic residues over residues 241-250 (EASSSEEPRN) and 258-286 (GHSERSDTNEKRSVDSSAKREKPVVRPEE). A Glycyl lysine isopeptide (Lys-Gly) (interchain with G-Cter in SUMO2) cross-link involves residue Lys323. Over residues 329 to 345 (SGRKIKGRGTIRYHTPP) the composition is skewed to basic residues. Phosphoserine is present on residues Ser379, Ser401, and Ser416. The segment covering 382-402 (KWSKGDKLSDPCSSRWDERSL) has biased composition (basic and acidic residues). Residues 403 to 421 (SQRSRSWSYNGYYSDLSTA) show a composition bias toward polar residues. Residues 423-459 (HSGHHKKRRKEKKVKHKKKGKKQKHCRRHKQTKKRRI) show a composition bias toward basic residues. Residues Ser463 and Ser471 each carry the phosphoserine modification. The segment covering 497–507 (KRDWSKSDKDV) has biased composition (basic and acidic residues). A compositionally biased stretch (low complexity) spans 524–542 (HSQSYSRGSSRSRTASKSS). The span at 543-568 (SHSRSRSKSRSSSKSGHRKRASKSPR) shows a compositional bias: basic residues. Glycyl lysine isopeptide (Lys-Gly) (interchain with G-Cter in SUMO2) cross-links involve residues Lys578 and Lys581. Ser613 carries the post-translational modification Phosphoserine. Residue Lys639 forms a Glycyl lysine isopeptide (Lys-Gly) (interchain with G-Cter in SUMO2) linkage. Residue Ser648 is modified to Phosphoserine. Residues Lys656 and Lys666 each participate in a glycyl lysine isopeptide (Lys-Gly) (interchain with G-Cter in SUMO2) cross-link. A disordered region spans residues 658–1072 (TGSSSSYHKR…EEDLSGKHDT (415 aa)). Composition is skewed to low complexity over residues 699–725 (SRSYSRSYTRSRSLASSHSRSRSPSSR) and 736–749 (SQCSRSSSYTSISS). Residues 754–774 (RAKRRLRSSGKKNSVSHKKHS) show a composition bias toward basic residues. A compositionally biased stretch (basic and acidic residues) spans 775–800 (SSSEKTLHSKYVKGRDRSSCVRKYSE). Residues 801 to 815 (SRSSLDYSSDSEQSS) are compositionally biased toward low complexity. Basic and acidic residues-rich tracts occupy residues 823-870 (QEKE…DHLR) and 885-909 (WDSESNSERDVTKNSKNDSHPSSDK). Phosphoserine is present on residues Ser866, Ser887, Ser889, Ser891, and Ser907. Over residues 910–922 (EEGEATSDSESEV) the composition is skewed to acidic residues. Positions 932-969 (TTKSSTNTSLPDDNGAWKSSKQRTSTSDSEGSCSNSEN) are enriched in polar residues. Over residues 988 to 1013 (EHTKKVKEKLKGKKDKKHKAPKRKQA) the composition is skewed to basic residues. Residues 1022–1031 (FGEEEEEEID) are compositionally biased toward acidic residues. A compositionally biased stretch (basic and acidic residues) spans 1032-1072 (DKQVTQESKEKKVSENNETIKDNILKTEKSSEEDLSGKHDT). A Glycyl lysine isopeptide (Lys-Gly) (interchain with G-Cter in SUMO2) cross-link involves residue Lys1057. Phosphoserine occurs at positions 1077 and 1146. Residues 1129–1156 (MEICTPDRSSPAKVEETSPLGNARLDTP) form a disordered region. Phosphothreonine is present on Thr1155. Residue Lys1163 forms a Glycyl lysine isopeptide (Lys-Gly) (interchain with G-Cter in SUMO2) linkage. A disordered region spans residues 1169-1215 (EHPQAEVVKQESSMSESKVLGEVGKQDSSSASLASAGESTGKKEVAE). A Glycyl lysine isopeptide (Lys-Gly) (interchain with G-Cter in SUMO1); alternate cross-link involves residue Lys1177. A Glycyl lysine isopeptide (Lys-Gly) (interchain with G-Cter in SUMO2); alternate cross-link involves residue Lys1177. Ser1203 carries the post-translational modification Phosphoserine. Glycyl lysine isopeptide (Lys-Gly) (interchain with G-Cter in SUMO2) cross-links involve residues Lys1216, Lys1225, and Lys1258. Residues 1251 to 1462 (LTTVPEMKPQ…RSPSESSRYS (212 aa)) form a disordered region. Residues 1311–1348 (SRSPSRSRSKSETKSRHRTRSVSYSHSRSRSRSSTSSY) form an arg/Ser tandem repeat-rich region. Low complexity-rich tracts occupy residues 1331–1351 (SVSYSHSRSRSRSSTSSYRSR) and 1359–1376 (RGWYSRGRTRSRSSSYRS). Over residues 1377-1388 (YKSHRTSSRSRS) the composition is skewed to basic residues. Residues 1389-1410 (RSSSYDPHSRSRSYTYDSYYSR) show a composition bias toward low complexity. The span at 1425–1435 (RGRSYNRRSRS) shows a compositional bias: basic residues.

It is found in the cell membrane. It carries out the reaction [protein]-peptidylproline (omega=180) = [protein]-peptidylproline (omega=0). Inhibited by cyclosporin A (CsA). PPIase that catalyzes the cis-trans isomerization of proline imidic peptide bonds in oligopeptides and may therefore assist protein folding. Component of a putative tumor-recognition complex involved in the function of NK cells. This chain is NK-tumor recognition protein, found in Homo sapiens (Human).